Here is a 204-residue protein sequence, read N- to C-terminus: Large ribosomal subunit protein eL15 (204 aa).

Over residues 172–182 (RGLRGRGHLHN) the composition is skewed to basic residues. The tract at residues 172 to 204 (RGLRGRGHLHNKAPPSRRANWKRNQTLSLPRYR) is disordered. Residues 193–204 (KRNQTLSLPRYR) show a composition bias toward polar residues.

This sequence belongs to the eukaryotic ribosomal protein eL15 family.

In Petunia hybrida (Petunia), this protein is Large ribosomal subunit protein eL15 (RPL15).